A 161-amino-acid chain; its full sequence is Cyclic pyranopterin monophosphate synthase (161 aa).

Residues 75 to 77 (LCH) and 113 to 114 (ME) each bind substrate. Asp128 is a catalytic residue.

The protein belongs to the MoaC family. As to quaternary structure, homohexamer; trimer of dimers.

The catalysed reaction is (8S)-3',8-cyclo-7,8-dihydroguanosine 5'-triphosphate = cyclic pyranopterin phosphate + diphosphate. It participates in cofactor biosynthesis; molybdopterin biosynthesis. Catalyzes the conversion of (8S)-3',8-cyclo-7,8-dihydroguanosine 5'-triphosphate to cyclic pyranopterin monophosphate (cPMP). This is Cyclic pyranopterin monophosphate synthase from Enterobacter sp. (strain 638).